Consider the following 379-residue polypeptide: Succinyl-diaminopimelate desuccinylase (379 aa).

H70 provides a ligand contact to Zn(2+). D72 is a catalytic residue. D103 serves as a coordination point for Zn(2+). E137 serves as the catalytic Proton acceptor. Zn(2+) contacts are provided by E138, E166, and H352.

This sequence belongs to the peptidase M20A family. DapE subfamily. As to quaternary structure, homodimer. Requires Zn(2+) as cofactor. Co(2+) serves as cofactor.

The enzyme catalyses N-succinyl-(2S,6S)-2,6-diaminopimelate + H2O = (2S,6S)-2,6-diaminopimelate + succinate. Its pathway is amino-acid biosynthesis; L-lysine biosynthesis via DAP pathway; LL-2,6-diaminopimelate from (S)-tetrahydrodipicolinate (succinylase route): step 3/3. Its function is as follows. Catalyzes the hydrolysis of N-succinyl-L,L-diaminopimelic acid (SDAP), forming succinate and LL-2,6-diaminopimelate (DAP), an intermediate involved in the bacterial biosynthesis of lysine and meso-diaminopimelic acid, an essential component of bacterial cell walls. The sequence is that of Succinyl-diaminopimelate desuccinylase from Burkholderia mallei (strain NCTC 10247).